Reading from the N-terminus, the 85-residue chain is Large ribosomal subunit protein bL27 (85 aa).

A disordered region spans residues 1–20 (MATKKAGGSTRNGRDSEAKR).

This sequence belongs to the bacterial ribosomal protein bL27 family.

In Haemophilus influenzae (strain ATCC 51907 / DSM 11121 / KW20 / Rd), this protein is Large ribosomal subunit protein bL27.